We begin with the raw amino-acid sequence, 371 residues long: Putative glutamate--cysteine ligase 2 (371 aa).

This sequence belongs to the glutamate--cysteine ligase type 2 family. YbdK subfamily.

It catalyses the reaction L-cysteine + L-glutamate + ATP = gamma-L-glutamyl-L-cysteine + ADP + phosphate + H(+). Its function is as follows. ATP-dependent carboxylate-amine ligase which exhibits weak glutamate--cysteine ligase activity. This is Putative glutamate--cysteine ligase 2 from Cupriavidus pinatubonensis (strain JMP 134 / LMG 1197) (Cupriavidus necator (strain JMP 134)).